The chain runs to 129 residues: Putative pre-16S rRNA nuclease (129 aa).

The protein belongs to the YqgF nuclease family.

The protein resides in the cytoplasm. In terms of biological role, could be a nuclease involved in processing of the 5'-end of pre-16S rRNA. The protein is Putative pre-16S rRNA nuclease of Campylobacter jejuni subsp. doylei (strain ATCC BAA-1458 / RM4099 / 269.97).